Reading from the N-terminus, the 309-residue chain is MAELKAVHQDAADAGHRSHVSVKAVWRELSSVVKIGIVNSNLITTFAGMWLAFYFTGEHFLENLHLVFFTLFGAALVIAGSCAINNYIDRDIDQYMERTKARPTVTGTMDPRRVLWLGIGLVAIGEMGLLMTTVTAAVVGLIGMATYVFLYTLWTKRHYTINTVVGSISGAVPPVIGWTAVDPEFHIVPLILFLIMFLWQPPHFLALAMKRCEEYRAAGIPMLPVVHGFAMTKRQIIVWVACLLPLPFYLFSLGVPFLIVATLLNVGWLLLGLAGLKMKDDIKWAKWMFVYSLNYLTILFVAMIIATLW.

The next 9 helical transmembrane spans lie at 35 to 55 (IGIVNSNLITTFAGMWLAFYF), 64 to 84 (LHLVFFTLFGAALVIAGSCAI), 114 to 134 (VLWLGIGLVAIGEMGLLMTTV), 135 to 155 (TAAVVGLIGMATYVFLYTLWT), 161 to 181 (INTVVGSISGAVPPVIGWTAV), 187 to 207 (IVPLILFLIMFLWQPPHFLAL), 231 to 251 (MTKRQIIVWVACLLPLPFYLF), 253 to 273 (LGVPFLIVATLLNVGWLLLGL), and 289 to 309 (FVYSLNYLTILFVAMIIATLW).

This sequence belongs to the UbiA prenyltransferase family. Protoheme IX farnesyltransferase subfamily. In terms of assembly, interacts with CtaA.

The protein resides in the cell membrane. It carries out the reaction heme b + (2E,6E)-farnesyl diphosphate + H2O = Fe(II)-heme o + diphosphate. It participates in porphyrin-containing compound metabolism; heme O biosynthesis; heme O from protoheme: step 1/1. Converts heme B (protoheme IX) to heme O by substitution of the vinyl group on carbon 2 of heme B porphyrin ring with a hydroxyethyl farnesyl side group. The polypeptide is Protoheme IX farnesyltransferase (Geobacillus kaustophilus (strain HTA426)).